An 883-amino-acid polypeptide reads, in one-letter code: MKKTTNEIRQSFLNFFKEKEHVIVPSSSLIPENDSTLLFTNAGMNQFKEYFLGQKKKFYPRVTTVQNCLRTGGKHNDLENVGYTKRHHTFFEMLGNFSFNDYFKKEAITYAWELLTSRKWFNIDKNKLWISVYEDDEETYKIWRDIIRIPCHHIVKIGSKNNSQYDSENFWQMGETGPCGPCTEIFYNYDDSNKSNDFLKDKNESFIEIWNIVFIEFNRISKTKIVPLINKSIDTGMGLERISAVLQNVHSNYKIDIFQKLIQKISNFTEIKDLNNISLKIIADHIRSCAFLIAENILPSNEHRGYVLRRIIRRALRHGHKIGIKNNFFYKLVPSLIEIMGDSAKILRKKEKIIEETLKIEEIQFSQTLDKGLKILNAEIKKSTNKTISGKTAFYLYDTFGFPIDLTSDICSEKNIKIDFKGFNIAKEEQKKRSSIKNKFYKDYNKDIIINDTCIFEGYKKNKTKSLVKYIFIKNESVFLIYKGQTATIFLDKTSFYPESGGQIGDIGELYHKKSRFIVENTKKYGDTIGHYGKLISGKIIVNDSIYSKINHVYRNAIQLNHSATHLLHAALQKVLGKNAIQKGSLVSNTHLRFDFSYSGNINLSQIQNIENIINKKIRSNDLIKIKNLSLEEAKKKKAIALFDYKYQSSVRVVFIKDFSIELCGGTHTKRTGNIGLFKIIEQSSVSSGIKRIEAVTGQQAIDYLHIKDNDMQNISFLLKCQNSKITEKIKKIIIQVEKLEKKTDQLQKRENIYQIKKLSKKINNIKGINLLINTFTNYDQKSMKMIIDQLKKELKISIIIFINKNKNDFTVIIRVTKNLINYITALKIINIFIKKANGKGGGKKEIAEGGGMNIKKLPMILNYIKSWITIQLENIKTKNFNN.

Residues His562, His566, Cys664, and His668 each contribute to the Zn(2+) site.

The protein belongs to the class-II aminoacyl-tRNA synthetase family. Homotetramer. Zn(2+) is required as a cofactor.

It localises to the cytoplasm. The catalysed reaction is tRNA(Ala) + L-alanine + ATP = L-alanyl-tRNA(Ala) + AMP + diphosphate. In terms of biological role, catalyzes the attachment of alanine to tRNA(Ala) in a two-step reaction: alanine is first activated by ATP to form Ala-AMP and then transferred to the acceptor end of tRNA(Ala). Also edits incorrectly charged Ser-tRNA(Ala) and Gly-tRNA(Ala) via its editing domain. This chain is Alanine--tRNA ligase, found in Buchnera aphidicola subsp. Schizaphis graminum (strain Sg).